We begin with the raw amino-acid sequence, 151 residues long: Cathelicidin-3 (151 aa).

The first 17 residues, 1-17 (MLSCWVLLLALLGGACA), serve as a signal peptide directing secretion. The propeptide occupies 18–122 (LPAPLGYSQA…TCVDSMADPV (105 aa)). Cystine bridges form between cysteine 75–cysteine 86 and cysteine 97–cysteine 114. The chain crosses the membrane as a helical span at residues 128–148 (WPLVPVAINTVAAGINLYKAI).

This sequence belongs to the cathelicidin family. In terms of tissue distribution, detected in bone marrow, liver and lung.

The protein resides in the secreted. The protein localises to the membrane. Functionally, may bind bacterial lipopolysaccharide (LPS). May have antimicrobial activity and play a role in the innate immune response. The chain is Cathelicidin-3 (CATHL3) from Gallus gallus (Chicken).